Reading from the N-terminus, the 562-residue chain is Serine palmitoyltransferase 2 (562 aa).

Residues 67–87 form a helical membrane-spanning segment; that stretch reads PMLVAVLTYVGYGVLTLFGYL. The residue at position 379 (Lys-379) is an N6-(pyridoxal phosphate)lysine.

This sequence belongs to the class-II pyridoxal-phosphate-dependent aminotransferase family. Component of the serine palmitoyltransferase (SPT) complex, which is composed of SPTLC1, SPTLC2 or SPTLC3 and SPTSSA or SPTSSB. The heterodimer consisting of SPTLC1 and SPTLC2/SPTLC3 forms the catalytic core of the enzyme, while SPTSSA or SPTSSB subunits determine substrate specificity. SPT also interacts with ORMDL proteins, especially ORMDL3, which negatively regulate SPT activity in the presence of ceramides. Forms dimers of heterodimers with SPTLC1. Pyridoxal 5'-phosphate is required as a cofactor. In terms of tissue distribution, widely expressed.

The protein localises to the endoplasmic reticulum membrane. It carries out the reaction L-serine + hexadecanoyl-CoA + H(+) = 3-oxosphinganine + CO2 + CoA. The enzyme catalyses octadecanoyl-CoA + L-serine + H(+) = 3-oxoeicosasphinganine + CO2 + CoA. The protein operates within lipid metabolism; sphingolipid metabolism. With respect to regulation, SPT complex catalytic activity is negatively regulated by ORMDL proteins, including ORMDL3, in the presence of ceramides. This mechanism allows to maintain ceramide levels at sufficient concentrations for the production of complex sphingolipids, but which prevents the accumulation of ceramides to levels that trigger apoptosis. Its function is as follows. Component of the serine palmitoyltransferase multisubunit enzyme (SPT) that catalyzes the initial and rate-limiting step in sphingolipid biosynthesis by condensing L-serine and activated acyl-CoA (most commonly palmitoyl-CoA) to form long-chain bases. The SPT complex is composed of SPTLC1, SPTLC2 or SPTLC3 and SPTSSA or SPTSSB. Within this complex, the heterodimer consisting of SPTLC1 and SPTLC2/SPTLC3 forms the catalytic core. The composition of the serine palmitoyltransferase (SPT) complex determines the substrate preference. The SPTLC1-SPTLC2-SPTSSA complex shows a strong preference for C16-CoA substrate, while the SPTLC1-SPTLC3-SPTSSA isozyme uses both C14-CoA and C16-CoA as substrates, with a slight preference for C14-CoA. The SPTLC1-SPTLC2-SPTSSB complex shows a strong preference for C18-CoA substrate, while the SPTLC1-SPTLC3-SPTSSB isozyme displays an ability to use a broader range of acyl-CoAs, without apparent preference. Crucial for adipogenesis. The sequence is that of Serine palmitoyltransferase 2 from Homo sapiens (Human).